Here is a 104-residue protein sequence, read N- to C-terminus: SOSS complex subunit C (104 aa).

The protein belongs to the SOSS-C family. In terms of assembly, belongs to the multiprotein complex Integrator. Component of the SOSS complex, composed of SOSS-B (SOSS-B1/NABP2 or SOSS-B2/NABP1), SOSS-A/INTS3 and SOSS-C/INIP.

It is found in the nucleus. Its function is as follows. Component of the SOSS complex, a multiprotein complex that functions downstream of the MRN complex to promote DNA repair and G2/M checkpoint. The SOSS complex associates with single-stranded DNA at DNA lesions and influences diverse endpoints in the cellular DNA damage response including cell-cycle checkpoint activation, recombinational repair and maintenance of genomic stability. Required for efficient homologous recombination-dependent repair of double-strand breaks (DSBs). This chain is SOSS complex subunit C (INIP), found in Taeniopygia guttata (Zebra finch).